The chain runs to 282 residues: 2-dehydro-3-deoxyphosphooctonate aldolase (282 aa).

The protein belongs to the KdsA family.

Its subcellular location is the cytoplasm. The enzyme catalyses D-arabinose 5-phosphate + phosphoenolpyruvate + H2O = 3-deoxy-alpha-D-manno-2-octulosonate-8-phosphate + phosphate. Its pathway is carbohydrate biosynthesis; 3-deoxy-D-manno-octulosonate biosynthesis; 3-deoxy-D-manno-octulosonate from D-ribulose 5-phosphate: step 2/3. The protein operates within bacterial outer membrane biogenesis; lipopolysaccharide biosynthesis. The protein is 2-dehydro-3-deoxyphosphooctonate aldolase of Shewanella sediminis (strain HAW-EB3).